The following is a 328-amino-acid chain: MAVNGASSSGLIVSFGEMLIDFVPTVSGVSLAEAPGFLKAPGGAPANVAIAVTRLGGKSAFVGKLGDDEFGHMLAGILKTNGVQAEGINFDKGARTALAFVTLRADGEREFMFYRNPSADMLLTPAELNLDLIRSAKVFHYGSISLIVEPCRAAHMKAMEVAKEAGALLSYDPNLRLPLWPSAEEAKKQIKSIWDSADVIKVSDVELEFLTGSNKIDDESAMSLWHPNLKLLLVTLGEKGCNYYTKKFHGTVGGFHVKTVDTTGAGDSFVGALLTKIVDDQTILEDEARLKEVLRFSCACGAITTTKKGAIPALPTASEALTLLKGGA.

Belongs to the carbohydrate kinase PfkB family.

The enzyme catalyses D-fructose + ATP = D-fructose 6-phosphate + ADP + H(+). It functions in the pathway glycan biosynthesis; starch biosynthesis. Functionally, may play an important role in maintaining the flux of carbon towards starch formation. The chain is Fructokinase-2 (FRK2) from Solanum lycopersicum (Tomato).